Reading from the N-terminus, the 317-residue chain is Methionyl-tRNA formyltransferase (317 aa).

Position 112–115 (112–115 (SILP)) interacts with (6S)-5,6,7,8-tetrahydrofolate.

The protein belongs to the Fmt family.

It carries out the reaction L-methionyl-tRNA(fMet) + (6R)-10-formyltetrahydrofolate = N-formyl-L-methionyl-tRNA(fMet) + (6S)-5,6,7,8-tetrahydrofolate + H(+). Attaches a formyl group to the free amino group of methionyl-tRNA(fMet). The formyl group appears to play a dual role in the initiator identity of N-formylmethionyl-tRNA by promoting its recognition by IF2 and preventing the misappropriation of this tRNA by the elongation apparatus. The chain is Methionyl-tRNA formyltransferase from Mannheimia succiniciproducens (strain KCTC 0769BP / MBEL55E).